A 99-amino-acid polypeptide reads, in one-letter code: Putative septation protein SpoVG (99 aa).

The protein belongs to the SpoVG family.

Its function is as follows. Could be involved in septation. In Myxococcus xanthus (strain DK1622), this protein is Putative septation protein SpoVG.